The following is a 436-amino-acid chain: GTPase Der (436 aa).

2 EngA-type G domains span residues 4-167 (PVVA…PKDA) and 175-351 (IKFS…DNHE). GTP-binding positions include 10 to 17 (GRPNVGKS), 57 to 61 (DTGGI), 119 to 122 (NKVD), 181 to 188 (GRPNVGKS), 229 to 233 (DTAGI), and 294 to 297 (NKWD). The KH-like domain maps to 352 to 436 (QRISSAVLND…PIHIIERRRK (85 aa)).

The protein belongs to the TRAFAC class TrmE-Era-EngA-EngB-Septin-like GTPase superfamily. EngA (Der) GTPase family. Associates with the 50S ribosomal subunit.

In terms of biological role, GTPase that plays an essential role in the late steps of ribosome biogenesis. In Ligilactobacillus salivarius (strain UCC118) (Lactobacillus salivarius), this protein is GTPase Der.